Consider the following 928-residue polypeptide: Probable outer membrane protein pmp10 (928 aa).

The first 25 residues, 1–25 (MKSQFSWLVLSSTLACFTSCSTVFA), serve as a signal peptide directing secretion. Positions 635 to 928 (TLCSDRGFWA…NVDLGGKFQF (294 aa)) constitute an Autotransporter domain.

It belongs to the PMP outer membrane protein family.

Its subcellular location is the secreted. It is found in the cell wall. It localises to the cell outer membrane. This Chlamydia pneumoniae (Chlamydophila pneumoniae) protein is Probable outer membrane protein pmp10 (pmp10).